The primary structure comprises 320 residues: UDP-3-O-acyl-N-acetylglucosamine deacetylase (320 aa).

Residues His-92, His-251, and Asp-255 each contribute to the Zn(2+) site. The active-site Proton donor is His-278.

Belongs to the LpxC family. Zn(2+) is required as a cofactor.

It catalyses the reaction a UDP-3-O-[(3R)-3-hydroxyacyl]-N-acetyl-alpha-D-glucosamine + H2O = a UDP-3-O-[(3R)-3-hydroxyacyl]-alpha-D-glucosamine + acetate. It functions in the pathway glycolipid biosynthesis; lipid IV(A) biosynthesis; lipid IV(A) from (3R)-3-hydroxytetradecanoyl-[acyl-carrier-protein] and UDP-N-acetyl-alpha-D-glucosamine: step 2/6. Catalyzes the hydrolysis of UDP-3-O-myristoyl-N-acetylglucosamine to form UDP-3-O-myristoylglucosamine and acetate, the committed step in lipid A biosynthesis. The polypeptide is UDP-3-O-acyl-N-acetylglucosamine deacetylase (Psychrobacter arcticus (strain DSM 17307 / VKM B-2377 / 273-4)).